A 725-amino-acid polypeptide reads, in one-letter code: Ribonuclease R (725 aa).

In terms of domain architecture, RNB spans 236-559 (RKDLRDKLII…QLHRLIKQMV (324 aa)). An S1 motif domain is found at 611–689 (GKSLKAQIVS…NLGKVDVVLE (79 aa)).

The protein belongs to the RNR ribonuclease family. RNase R subfamily.

The protein resides in the cytoplasm. The catalysed reaction is Exonucleolytic cleavage in the 3'- to 5'-direction to yield nucleoside 5'-phosphates.. Its function is as follows. 3'-5' exoribonuclease that releases 5'-nucleoside monophosphates and is involved in maturation of structured RNAs. The protein is Ribonuclease R of Mycoplasmopsis pulmonis (strain UAB CTIP) (Mycoplasma pulmonis).